A 374-amino-acid chain; its full sequence is MKRMGWAVTAAVTTIVLAQSSLAAQAADSTSGWRAPSCTKVTGDGAVTFTTDDGATLAPTTGTLQSVSYTHGLVALDTPNTLLATHNDELQRSTDAGCTWTKVATLGSGSTWLTAATGGRAFAWEKNGGYLARVDGRTVTKLSSPSADIVGVGTDKARRDHVRLAGSDGQLYDSTDAGATWKPLGKLAFGPGASVYTVSFDPADLDHAVAGGMTTGGAVTTDGGATWTAATGLSATAGGKSNLFAASVSPADRNVVYALGIDLVEAAPNSGAEGRHLYRSTDGGRTYTRIVDDTPDTELTNSTLLAPSPVDPNVLYFEYGTYFQAYGTDLYRYDARTGKVGKTHNAHDGISAIAFNPARPSVMYLGLEEVQIHH.

The N-terminal stretch at 1–26 is a signal peptide; the sequence is MKRMGWAVTAAVTTIVLAQSSLAAQA.

It is found in the secreted. Induces autolysis of dispase and thermolysin. This Streptomyces mobaraensis (Streptoverticillium mobaraense) protein is Dispase autolysis-inducing protein (daip).